A 920-amino-acid polypeptide reads, in one-letter code: Isoleucine--tRNA ligase (920 aa).

Positions 58–68 (PYANGHLHLGH) match the 'HIGH' region motif. Glutamate 569 contacts L-isoleucyl-5'-AMP. The 'KMSKS' region signature appears at 610 to 614 (KMSKS). Lysine 613 is an ATP binding site. Positions 895, 898, 910, and 913 each coordinate Zn(2+).

This sequence belongs to the class-I aminoacyl-tRNA synthetase family. IleS type 1 subfamily. In terms of assembly, monomer. Requires Zn(2+) as cofactor.

It localises to the cytoplasm. The catalysed reaction is tRNA(Ile) + L-isoleucine + ATP = L-isoleucyl-tRNA(Ile) + AMP + diphosphate. In terms of biological role, catalyzes the attachment of isoleucine to tRNA(Ile). As IleRS can inadvertently accommodate and process structurally similar amino acids such as valine, to avoid such errors it has two additional distinct tRNA(Ile)-dependent editing activities. One activity is designated as 'pretransfer' editing and involves the hydrolysis of activated Val-AMP. The other activity is designated 'posttransfer' editing and involves deacylation of mischarged Val-tRNA(Ile). The chain is Isoleucine--tRNA ligase from Helicobacter pylori (strain J99 / ATCC 700824) (Campylobacter pylori J99).